The chain runs to 673 residues: Putative transcription factor tau subunit sfc9 (673 aa).

In terms of assembly, may be a component of the TFIIIC complex.

Its subcellular location is the nucleus. In Schizosaccharomyces pombe (strain 972 / ATCC 24843) (Fission yeast), this protein is Putative transcription factor tau subunit sfc9.